Reading from the N-terminus, the 223-residue chain is Icarapin (223 aa).

The N-terminal stretch at 1-19 (MKTLGVLFIAAWFIACTHS) is a signal peptide. N-linked (GlcNAc...) asparagine glycans are attached at residues Asn126, Asn142, Asn168, and Asn193. The segment covering 186–203 (LPTLIGKNETSTQSSRSV) has biased composition (polar residues). Residues 186–223 (LPTLIGKNETSTQSSRSVESVEDFDNEIPKNQGDVLTA) are disordered.

In terms of tissue distribution, expressed by the venom duct.

The protein localises to the secreted. This is Icarapin from Apis mellifera carnica (Carniolan honeybee).